We begin with the raw amino-acid sequence, 101 residues long: Ferredoxin-3 (101 aa).

2 consecutive 4Fe-4S ferredoxin-type domains span residues 17–46 (YLMK…LHGL) and 70–100 (KVMA…HAAL). C26, C29, C32, C36, C80, C83, C86, and C90 together coordinate [4Fe-4S] cluster.

In terms of assembly, homodimer. Requires [4Fe-4S] cluster as cofactor.

Functionally, ferredoxins are iron-sulfur proteins that transfer electrons in a wide variety of metabolic reactions. In Rhodobacter capsulatus (Rhodopseudomonas capsulata), this protein is Ferredoxin-3 (fdxB).